The primary structure comprises 322 residues: Succinate/fumarate mitochondrial transporter (322 aa).

Solcar repeat units follow at residues 8-99, 111-202, and 212-303; these read SHPA…YRTL, GNTF…LKEF, and LPSW…VREH. The next 6 helical transmembrane spans lie at 11-31, 68-88, 114-134, 177-193, 219-235, and 278-295; these read AINL…CHPL, FLAL…KMAI, FVAG…PMEV, GVSL…GANF, CIGL…NAPL, and GITP…VTFT.

Belongs to the mitochondrial carrier (TC 2.A.29) family.

It is found in the mitochondrion inner membrane. Its function is as follows. Transports cytoplasmic succinate, derived from isocitrate by the action of isocitrate lyase in the cytosol, into the mitochondrial matrix in exchange for fumarate. This Saccharomyces cerevisiae (strain ATCC 204508 / S288c) (Baker's yeast) protein is Succinate/fumarate mitochondrial transporter (SFC1).